A 419-amino-acid chain; its full sequence is L-rhamnose isomerase (419 aa).

Mn(2+)-binding residues include histidine 262, aspartate 294, and aspartate 296.

It belongs to the rhamnose isomerase family. Homotetramer. Mn(2+) serves as cofactor.

It is found in the cytoplasm. The catalysed reaction is L-rhamnopyranose = L-rhamnulose. The protein operates within carbohydrate degradation; L-rhamnose degradation; glycerone phosphate from L-rhamnose: step 1/3. Its function is as follows. Catalyzes the interconversion of L-rhamnose and L-rhamnulose. The protein is L-rhamnose isomerase of Shigella sonnei (strain Ss046).